A 952-amino-acid polypeptide reads, in one-letter code: DNA topoisomerase 1 (952 aa).

The Toprim domain maps to 12-135 (RRLVIVESPA…VKRMVFHEIT (124 aa)). Glu18 and Asp104 together coordinate Mg(2+). Residues 150–602 (NQKLVDAQET…RFYFGEGDGT (453 aa)) enclose the Topo IA-type catalytic domain. The interval 184–189 (SAGRVQ) is interaction with DNA. Tyr334 acts as the O-(5'-phospho-DNA)-tyrosine intermediate in catalysis. The tract at residues 847 to 952 (RFGPYVTDGE…KATASKTSED (106 aa)) is disordered. Residues 871-884 (TPERGYELLAEKRA) show a composition bias toward basic and acidic residues. Positions 885 to 906 (KGPAKKTAKKAVKKTAAKKAPA) are enriched in basic residues. Low complexity-rich tracts occupy residues 907–930 (KKAAATKKTAAAKTTAAKKTAAKS) and 937–952 (AKTAAKKATASKTSED).

The protein belongs to the type IA topoisomerase family. In terms of assembly, monomer. Mg(2+) is required as a cofactor.

It catalyses the reaction ATP-independent breakage of single-stranded DNA, followed by passage and rejoining.. Releases the supercoiling and torsional tension of DNA, which is introduced during the DNA replication and transcription, by transiently cleaving and rejoining one strand of the DNA duplex. Introduces a single-strand break via transesterification at a target site in duplex DNA. The scissile phosphodiester is attacked by the catalytic tyrosine of the enzyme, resulting in the formation of a DNA-(5'-phosphotyrosyl)-enzyme intermediate and the expulsion of a 3'-OH DNA strand. The free DNA strand then undergoes passage around the unbroken strand, thus removing DNA supercoils. Finally, in the religation step, the DNA 3'-OH attacks the covalent intermediate to expel the active-site tyrosine and restore the DNA phosphodiester backbone. Functionally, relaxes supercoiled plasmid in vitro; in the presence of sIHF (integration host factor) relaxation is decreased. This Streptomyces coelicolor (strain ATCC BAA-471 / A3(2) / M145) protein is DNA topoisomerase 1.